The chain runs to 263 residues: Phosphatidylglycerol--prolipoprotein diacylglyceryl transferase (263 aa).

4 consecutive transmembrane segments (helical) span residues 6–26 (VIFS…VLGI), 50–70 (LLTA…VLIY), 85–105 (TWEG…AVII), and 112–132 (IPIF…LFLG). Arg133 is a binding site for a 1,2-diacyl-sn-glycero-3-phospho-(1'-sn-glycerol). Transmembrane regions (helical) follow at residues 169–189 (LYEA…LFFL), 197–217 (GALT…VEFF), and 233–253 (MGQL…LGAL).

Belongs to the Lgt family.

The protein localises to the cell membrane. It carries out the reaction L-cysteinyl-[prolipoprotein] + a 1,2-diacyl-sn-glycero-3-phospho-(1'-sn-glycerol) = an S-1,2-diacyl-sn-glyceryl-L-cysteinyl-[prolipoprotein] + sn-glycerol 1-phosphate + H(+). It participates in protein modification; lipoprotein biosynthesis (diacylglyceryl transfer). In terms of biological role, catalyzes the transfer of the diacylglyceryl group from phosphatidylglycerol to the sulfhydryl group of the N-terminal cysteine of a prolipoprotein, the first step in the formation of mature lipoproteins. In Wolbachia sp. subsp. Drosophila simulans (strain wRi), this protein is Phosphatidylglycerol--prolipoprotein diacylglyceryl transferase.